The primary structure comprises 238 residues: uncharacterized protein (238 aa).

The next 7 helical transmembrane spans lie at 22 to 42 (VYGW…GLYA), 49 to 69 (LFSL…YIQA), 78 to 98 (AVMG…GTMV), 105 to 125 (FGGG…GLSA), 141 to 161 (ILML…VVSL), 166 to 186 (PLMY…LTVV), and 208 to 228 (LSLI…WYLL).

This sequence belongs to the BI1 family.

It localises to the cell membrane. This is an uncharacterized protein from Chlamydia muridarum (strain MoPn / Nigg).